A 413-amino-acid chain; its full sequence is MSSSVSPLAPKTVPDMPVIAGVRLATAEAGIRYKNRTDVLLAVMDKGTAVAGVFTKSKCPSAPVEWCRAKLKGGKARALVVNSGNANAFTGKTGRSSTALTAKIAAKAVGCSESEIFLASTGVIGEPLDATKFDGVLGRLAETAEPGDYLAAAKAIMTTDTFPKVATATVKLGKAKVTINGMAKGAGMIAPDMATMLSFVFTDAPIAPAALQALLKSGVEDTFNAVTIDGDTSTSDTLLAFATGAAAEHGAPKISRASDPRLKAFVKAFNQVLANLAEQVARDGEGARKLVEITVEGAKTKASARKIAMSIANSPLVKTAIAGEDANWGRVVMAVGKAGEPADRDKLSISFNGIRVARSGARDPDYDEAQVSEAMKAPEIAIKVSLGLGKGRDRVMTCDLTKEYVAINGDYRS.

Residues Thr-158, Lys-184, Thr-195, Glu-285, Asn-408, and Ser-413 each coordinate substrate. Residue Thr-195 is the Nucleophile of the active site.

This sequence belongs to the ArgJ family. In terms of assembly, heterotetramer of two alpha and two beta chains.

It localises to the cytoplasm. It carries out the reaction N(2)-acetyl-L-ornithine + L-glutamate = N-acetyl-L-glutamate + L-ornithine. It catalyses the reaction L-glutamate + acetyl-CoA = N-acetyl-L-glutamate + CoA + H(+). The protein operates within amino-acid biosynthesis; L-arginine biosynthesis; L-ornithine and N-acetyl-L-glutamate from L-glutamate and N(2)-acetyl-L-ornithine (cyclic): step 1/1. It participates in amino-acid biosynthesis; L-arginine biosynthesis; N(2)-acetyl-L-ornithine from L-glutamate: step 1/4. In terms of biological role, catalyzes two activities which are involved in the cyclic version of arginine biosynthesis: the synthesis of N-acetylglutamate from glutamate and acetyl-CoA as the acetyl donor, and of ornithine by transacetylation between N(2)-acetylornithine and glutamate. The sequence is that of Arginine biosynthesis bifunctional protein ArgJ from Bradyrhizobium diazoefficiens (strain JCM 10833 / BCRC 13528 / IAM 13628 / NBRC 14792 / USDA 110).